The following is a 555-amino-acid chain: Benzoyl-CoA-dihydrodiol lyase (555 aa).

The protein belongs to the benzoyl-CoA oxygenase component C family. In terms of assembly, homodimer.

The catalysed reaction is 2,3-epoxy-2,3-dihydrobenzoyl-CoA + 2 H2O = (3Z)-6-oxohex-3-enoyl-CoA + formate + H(+). In terms of biological role, catalyzes the ring opening of 2,3-epoxy-2,3-dihydroxybenzoyl-CoA to form 3,4-didehydroadipyl-CoA semialdehyde. This Aromatoleum evansii (Azoarcus evansii) protein is Benzoyl-CoA-dihydrodiol lyase (boxC).